The primary structure comprises 308 residues: Glutaminase (308 aa).

The substrate site is built by Ser-66, Asn-117, Glu-161, Asn-168, Tyr-192, Tyr-244, and Val-262.

It belongs to the glutaminase family. In terms of assembly, homotetramer.

The enzyme catalyses L-glutamine + H2O = L-glutamate + NH4(+). This Proteus mirabilis (strain HI4320) protein is Glutaminase.